Reading from the N-terminus, the 414-residue chain is DNA primase small subunit PriS (414 aa).

Active-site residues include Asp98, Asp100, and Asp312.

This sequence belongs to the eukaryotic-type primase small subunit family. As to quaternary structure, heterodimer of a small subunit (PriS) and a large subunit (PriL). The cofactor is Mg(2+). Mn(2+) serves as cofactor.

Catalytic subunit of DNA primase, an RNA polymerase that catalyzes the synthesis of short RNA molecules used as primers for DNA polymerase during DNA replication. The small subunit contains the primase catalytic core and has DNA synthesis activity on its own. Binding to the large subunit stabilizes and modulates the activity, increasing the rate of DNA synthesis while decreasing the length of the DNA fragments, and conferring RNA synthesis capability. The DNA polymerase activity may enable DNA primase to also catalyze primer extension after primer synthesis. May also play a role in DNA repair. This Methanosarcina mazei (strain ATCC BAA-159 / DSM 3647 / Goe1 / Go1 / JCM 11833 / OCM 88) (Methanosarcina frisia) protein is DNA primase small subunit PriS.